The primary structure comprises 238 residues: AGEGNGRGPYVQADLAYAYEHITHDYPKPTDPSKGKLSTVSDYFRNIRTHSIHPRVSVGYDFGGWRIAADYARYRKWNDSKYSVSIKNLQRRTSNGNRRDRKTENQENGSFHAVSSLGLSAVYDFKLNDKFKPYIGARVAYGHVRHSIDSTKKTTEFLTTAGARGTDPTVSSPYKNTQDAHQESNSIRRVGLGVIAGVGFDITPNLTLDAGYRYHNWGRLENTRFKTHEASLGVRYRF.

Ala-1 is a signal peptide. Disordered stretches follow at residues 88–109 (NLQR…QENG) and 162–183 (GARG…AHQE). Positions 168-183 (PTVSSPYKNTQDAHQE) are enriched in polar residues.

This sequence belongs to the opacity porin family.

The protein localises to the cell outer membrane. In terms of biological role, implicated in a number of adherence functions. OPA proteins are implicated in pathogenesis and are subject to phase variation. The protein is Opacity protein opA66 of Neisseria gonorrhoeae.